A 447-amino-acid polypeptide reads, in one-letter code: Polyamine export protein (447 aa).

Residues 1–4 (MLNS) are Cytoplasmic-facing. Positions 1–197 (MLNSILVILC…ALAGVLRKQE (197 aa)) constitute a CNNM transmembrane domain. The chain crosses the membrane as a helical span at residues 5–25 (ILVILCLIAVSAFFSMSEISL). Over 26-54 (AASRKIKLKLLADEGNINAQRVLNMQENP) the chain is Periplasmic. The helical transmembrane segment at 55–75 (GMFFTVVQIGLNAVAILGGIV) threads the bilayer. Topologically, residues 76–99 (GDAAFSPAFHSLFSRYMSAELSEQ) are cytoplasmic. A helical transmembrane segment spans residues 100 to 120 (LSFILSFSLVTGMFILFADLT). Residues 121–141 (PKRIGMIAPEAVALRIINPMR) are Periplasmic-facing. A helical membrane pass occupies residues 142-162 (FCLYVCTPLVWFFNGLANIIF). Topologically, residues 163-447 (RIFKLPMVRK…DAKDKEESVA (285 aa)) are cytoplasmic. CBS domains are found at residues 216 to 275 (MTPR…NQSL) and 282 to 343 (QIRN…GLEE).

Belongs to the UPF0053 family. PaeA subfamily.

It is found in the cell inner membrane. Involved in cadaverine and putrescine tolerance in stationary phase. May facilitate the efflux of both cadaverine and putrescine from the cytoplasm, reducing potentially toxic levels under certain stress conditions. The polypeptide is Polyamine export protein (Escherichia coli O157:H7).